The following is a 784-amino-acid chain: ATP-dependent 6-phosphofructokinase, platelet type (784 aa).

An N-acetylmethionine modification is found at Met1. Positions 1–399 are N-terminal catalytic PFK domain 1; the sequence is MDADDSRAPK…NLNTYKRLAI (399 aa). Residues Ser6, Ser12, and Ser21 each carry the phosphoserine modification. Residues Gly34, 97–98, and 127–130 each bind ATP; these read RC and GDGS. Asp128 is a binding site for Mg(2+). Ser142 bears the Phosphoserine mark. Substrate is bound by residues 173 to 175, Arg210, 217 to 219, Glu273, Arg301, and 307 to 310; these read SID, MGR, and HVQR. Asp175 serves as the catalytic Proton acceptor. At Ser386 the chain carries Phosphoserine. Lys395 carries the N6-acetyllysine modification. Residues 400–411 are interdomain linker; that stretch reads KLPDDQIPKTNC. Residues 412-784 form a C-terminal regulatory PFK domain 2 region; that stretch reads NVAVINVGAP…QLEHVQPWSV (373 aa). Arg481 serves as a coordination point for beta-D-fructose 2,6-bisphosphate. Lys486 bears the N6-acetyllysine mark. Beta-D-fructose 2,6-bisphosphate is bound by residues 538–542, Arg576, 583–585, and Glu639; these read TVSNN and MGG. Ser540 is a glycosylation site (O-linked (GlcNAc) serine). Tyr651 carries the post-translational modification Phosphotyrosine. Residues Arg665 and 671–674 each bind beta-D-fructose 2,6-bisphosphate; that span reads HMQQ. At Lys688 the chain carries N6-acetyllysine. Arg744 is a beta-D-fructose 2,6-bisphosphate binding site. Ser783 is modified (phosphoserine).

It belongs to the phosphofructokinase type A (PFKA) family. ATP-dependent PFK group I subfamily. Eukaryotic two domain clade 'E' sub-subfamily. As to quaternary structure, homo- and heterotetramers. Phosphofructokinase (PFK) enzyme functions as a tetramer composed of different combinations of 3 types of subunits, called PFKM (where M stands for Muscle), PFKL (Liver) and PFKP (Platelet). The composition of the PFK tetramer differs according to the tissue type it is present in. In muscles, it is composed of 4 PFKM subunits (also called M4). In the liver, the predominant form is a tetramer of PFKL subunits (L4). In erythrocytes, both PFKM and PFKL subunits randomly tetramerize to form M4, L4 and other combinations (ML3, M2L2, M3L). In platelets, brain and fibroblasts, PFK contains a higher proportion of PFKP subunits. The kinetic and regulatory properties of the tetrameric enzyme are dependent on the subunit composition, hence can vary across tissues. Interacts with ATG4B; promoting phosphorylation of ATG4B. Requires Mg(2+) as cofactor. Phosphorylation at Ser-386 promotes interaction with ATG4B. Post-translationally, glcNAcylation decreases enzyme activity.

The protein resides in the cytoplasm. The enzyme catalyses beta-D-fructose 6-phosphate + ATP = beta-D-fructose 1,6-bisphosphate + ADP + H(+). It functions in the pathway carbohydrate degradation; glycolysis; D-glyceraldehyde 3-phosphate and glycerone phosphate from D-glucose: step 3/4. Allosterically activated by ADP, AMP, or fructose 2,6-bisphosphate, and allosterically inhibited by ATP or citrate. In terms of biological role, catalyzes the phosphorylation of D-fructose 6-phosphate to fructose 1,6-bisphosphate by ATP, the first committing step of glycolysis. The polypeptide is ATP-dependent 6-phosphofructokinase, platelet type (PFKP) (Homo sapiens (Human)).